We begin with the raw amino-acid sequence, 163 residues long: Urease accessory protein UreE (163 aa).

The tract at residues 134-163 is disordered; the sequence is EAGAYGGGHRHHHDDDAPSIRQPARLRIHE.

Belongs to the UreE family.

It localises to the cytoplasm. Its function is as follows. Involved in urease metallocenter assembly. Binds nickel. Probably functions as a nickel donor during metallocenter assembly. This chain is Urease accessory protein UreE, found in Methylobacillus flagellatus (strain ATCC 51484 / DSM 6875 / VKM B-1610 / KT).